The primary structure comprises 521 residues: MFTGLHDILIILFLLVTLKIAQNVDHTKFLQKYGYLTSGDNQLSSESLSDALKNMQRMAGLEETGELDERTIQMMERPRCGHPDVEDHQKSRGKRYAPPQFKWKEKIITYGCKAVGTSTRISLDDLRRTMHQAASQWSELADVEIVESSVKNPMMVISAGRENHYPCTVRFDTKTLAHAFFPTNGQIHINDRVQFAMTNYTERMGANSLYSVVAHEMGHALGFSHSPDIDSVMFAYDTPRKWKFTSMDKYNMRSYYGAKASKKENEEEERKTENEDKRRKTEKDRGRTREHESDDIRPNECRVENPIVVQYRGEYLIFKSQWVWRVSSDWKRLIIKAVPINQLFPGLPNPIDAAVTVGHNLWVFVGEMIYVIYGNHMVHAPLRLSDIGINEKYVDLAYEWHYFNPPAVYIWKGSRYWKLDEKMYHRRVDERYPKDTDLNWARVPKGVHSAFTYEKEIHLLRGNQVFRMNSSRSVFDIADGYPQPLQSFFGFCPRNEKLVLNSSSSHFSLIYATITILILIF.

The first 21 residues, 1-21, serve as a signal peptide directing secretion; sequence MFTGLHDILIILFLLVTLKIA. Residues 22-95 constitute a propeptide, activation peptide; sequence QNVDHTKFLQ…EDHQKSRGKR (74 aa). A Cysteine switch motif is present at residues 78 to 85; it reads PRCGHPDV. Cys80 is a Zn(2+) binding site. The Extracellular portion of the chain corresponds to 96 to 500; it reads YAPPQFKWKE…FCPRNEKLVL (405 aa). A glycan (N-linked (GlcNAc...) asparagine) is linked at Asn199. Residue His215 coordinates Zn(2+). The active site involves Glu216. Zn(2+)-binding residues include His219 and His225. A disordered region spans residues 259–298; sequence KASKKENEEEERKTENEDKRRKTEKDRGRTREHESDDIRP. Residues 261-298 are compositionally biased toward basic and acidic residues; that stretch reads SKKENEEEERKTENEDKRRKTEKDRGRTREHESDDIRP. Hemopexin repeat units lie at residues 300-347, 391-443, and 444-492; these read ECRV…FPGL, EKYV…WARV, and PKGV…FGFC. The N-linked (GlcNAc...) asparagine glycan is linked to Asn469. Residues 501 to 521 traverse the membrane as a helical segment; it reads NSSSSHFSLIYATITILILIF.

The protein belongs to the peptidase M10A family. The cofactor is Zn(2+). Expressed in the anchor cell. Expressed in the anchor cell throughout the L3 and the early L4 stage, but not in vulva precursor cells P6.p, P6.px, or P6.pxx. Expression in P6.pxxx cells begins in late-L4 stage. During L4 lethargus, expressed in all four vulE cells, but not in vulF cells. The expression in vulE cells persists in adulthood. In males, expressed in the linker cell (LC) from the early L4 stage until LC death during the L4-to-adult molt.

The protein localises to the cell membrane. It is found in the basolateral cell membrane. Functionally, metalloprotease which, together with cadherin cdh-3 and hemicentin him-4, plays a role in anchor cell (AC) invasion during postembryonic vulval development probably by promoting the degradation of the basement membrane separating the gonad from the vulva epithelium. This is Matrix metalloproteinase-A from Caenorhabditis elegans.